The chain runs to 870 residues: DNA mismatch repair protein MutS (870 aa).

629 to 636 (GPNMGGKS) contacts ATP.

This sequence belongs to the DNA mismatch repair MutS family.

Functionally, this protein is involved in the repair of mismatches in DNA. It is possible that it carries out the mismatch recognition step. This protein has a weak ATPase activity. In Polaromonas naphthalenivorans (strain CJ2), this protein is DNA mismatch repair protein MutS.